The following is a 444-amino-acid chain: MSDMTPREIVQELDKHIVGQKDAKRAVAIALRNRWRRQQLPEALRQEVTPKNILMIGPTGVGKTEIARRLARLANAPFIKVEATKFTEVGYVGRDVESIIRDLVDAAIKLLREQEMGKVRFRAEEAAEERVLDVLLPAPRQAGFMSEPASAPEQSETRQKFRKRLREGQLDDKEIEIQVSATPVGVEIMTPPGMEEMASQLQSLFQNIGGGRSQTRKLKIRDAMKLLTDEEAARMVNQDELKLRAVANVEQNGIVFLDEIDKVAKRGEYGGADVSREGVQRDLLPLVEGCTVNTKFGMVRTDHILFIASGAFHLSKPSDLIPELQGRLPIRVELSALTAEDFVRILTEPDASLTEQYSALLQTEGVEVNFAEDGVRRIAEIATRVNERTENIGARRLHTVMERLLEQISFEAPDHQGPVSIDAAYVDERLEELVQDEDLSRYIL.

Residues Val-18, 60–65 (GVGKTE), Asp-258, Glu-323, and Arg-395 contribute to the ATP site.

It belongs to the ClpX chaperone family. HslU subfamily. In terms of assembly, a double ring-shaped homohexamer of HslV is capped on each side by a ring-shaped HslU homohexamer. The assembly of the HslU/HslV complex is dependent on binding of ATP.

Its subcellular location is the cytoplasm. Its function is as follows. ATPase subunit of a proteasome-like degradation complex; this subunit has chaperone activity. The binding of ATP and its subsequent hydrolysis by HslU are essential for unfolding of protein substrates subsequently hydrolyzed by HslV. HslU recognizes the N-terminal part of its protein substrates and unfolds these before they are guided to HslV for hydrolysis. In Thioalkalivibrio sulfidiphilus (strain HL-EbGR7), this protein is ATP-dependent protease ATPase subunit HslU.